The chain runs to 160 residues: MGKIALQLKATLENITNLRPVGEDFRWYLKMKCGNCGEISDKWQYIRLMDSVALKGGRGSASMVQKCKLCARENSIEILSSTIKPYNAEDNENFKTIVEFECRGLEPVDFQPQAGFAAEGVESGTAFSDINLQEKDWTDYDEKAQESVGIYEVTHQFVKC.

The Zn(2+) site is built by Cys33, Cys36, Cys67, and Cys70. Phosphoserine is present on Ser75.

Belongs to the UPF0587 family. As to quaternary structure, monomer.

The chain is CXXC motif containing zinc binding protein from Homo sapiens (Human).